Here is a 334-residue protein sequence, read N- to C-terminus: F-box only protein 16 (334 aa).

The 47-residue stretch at 86-132 (LDFTTKLPRVLSVYIFSFLDPRSLCRCAQVSWYWKSLAELDQLWMLK) folds into the F-box domain. 2 disordered regions span residues 168–222 (PKTP…WRSS) and 314–334 (LEHLQKHPGLQSPSPRLQSQS). A compositionally biased stretch (low complexity) spans 194 to 204 (SPSLAFRSSSS). A compositionally biased stretch (basic and acidic residues) spans 210 to 222 (NPGEKELPPWRSS). The segment covering 323-334 (LQSPSPRLQSQS) has biased composition (low complexity).

In terms of assembly, part of a SCF (SKP1-cullin-F-box) protein ligase complex.

Functionally, probably recognizes and binds to some phosphorylated proteins and promotes their ubiquitination and degradation. The protein is F-box only protein 16 (Fbxo16) of Mus musculus (Mouse).